The sequence spans 223 residues: Cytolethal distending toxin subunit A (223 aa).

The signal sequence occupies residues 1–15 (MKKFLPSLLLMGSVA). Residue cysteine 16 is the site of N-palmitoyl cysteine attachment. Cysteine 16 carries the S-diacylglycerol cysteine lipid modification. A disordered region spans residues 20 to 48 (QRMNDYSQPESQSDLAPKSSTIQPQPQPL). The interval 91 to 102 (WALAKRNWLWAY) is mediates binding to target cells. The Ricin B-type lectin domain maps to 123–212 (HREYFRFVNQ…EPSRDQTWYL (90 aa)).

In terms of assembly, heterotrimer of 3 subunits, CdtA, CdtB and CdtC.

Its subcellular location is the cell outer membrane. CDTs are cytotoxins which induce host cell distension, growth arrest in G2/M phase, nucleus swelling, and chromatin fragmentation in HeLa cells. CdtA, along with CdtC, probably forms a heterodimeric subunit required for the delivery of CdtB. This chain is Cytolethal distending toxin subunit A (cdtA), found in Haemophilus ducreyi (strain 35000HP / ATCC 700724).